Consider the following 91-residue polypeptide: MSNQSKLNSAAYDQLNKDADRILHLIKVQMDNLTLPSCPLYEEVLDTQMFGLQKEVDFAVQLGLVDKEDGKQLMLRLEKELSKLHEAFTNV.

The protein belongs to the UPF0358 family.

The polypeptide is UPF0358 protein SERP0701 (Staphylococcus epidermidis (strain ATCC 35984 / DSM 28319 / BCRC 17069 / CCUG 31568 / BM 3577 / RP62A)).